The following is a 1153-amino-acid chain: MDGAVRLDWTGLDLTGHEIHDGVPIASRVQVMVSFPLFKDQHIIMSSKESPSRKSSTIGQSTRNGSCQADTQKGQLPPVGEKPKPVKENPMKKLKEMSQRPLPTQHGDGTYPTEKKLTGIGEDLKHIRGYDVKTLLAMVKSKLKGEKLKDDKTMLMERVMQLVARLPTESKKRAELTDSLINELWESLDHPPLNYLGPEHSYRTPDGSYNHPFNPQLGAAGSRYARSVIPTVTPPGALPDPGLIFDSIMGRTPNSYRKHPNNVSSILWYWATIIIHDIFWTDPRDINTNKSSSYLDLAPLYGNSQEMQDSIRTFKDGRMKPDCYADKRLAGMPPGVSVLLIMFNRFHNHVAENLALINEGGRFNKPSDLLEGEAREAAWKKYDNDLFQVARLVTSGLYINITLVDYVRNIVNLNRVDTTWTLDPRQDAGAHVGTADGAERGTGNAVSAEFNLCYRWHSCISEKDSKFVEAQFQNIFGKPASEVRPDEMWKGFAKMEQNTPADPGQRTFGGFKRGPDGKFDDDDLVRCISEAVEDVAGAFGARNVPQAMKVVETMGIIQGRKWNVAGLNEFRKHFHLKPYSTFEDINSDPGVAEALRRLYDHPDNVELYPGLVAEEDKQPMVPGVGIAPTYTISRVVLSDAVCLVRGDRFYTTDFTPRNLTNWGYKEVDYDLSVNHGCVFYKLFIRAFPNHFKQNSVYAHYPMVVPSENKRILEALGRADLFDFEAPKYIPPRVNITSYGGAEYILETQEKYKVTWHEGLGFLMGEGGLKFMLSGDDPLHAQQRKCMAAQLYKDGWTEAVKAFYAGMMEELLVSKSYFLGNNKHRHVDIIRDVGNMVHVHFASQVFGLPLKTAKNPTGVFTEQEMYGILAAIFTTIFFDLDPSKSFPLRTKTREVCQKLAKLVEANVKLINKIPWSRGMFVGKPAKDEPLSIYGKTMIKGLKAHGLSDYDIAWSHVVPTSGAMVPNQAQVFAQAVDYYLSPAGMHYIPEIHMVALQPSTPETDALLLGYAMEGIRLAGTFGSYREAAVDDVVKEDNGRQVPVKAGDRVFVSFVDAARDPKHFPDPEVVNPRRPAKKYIHYGVGPHACLGRDASQIAITEMFRCLFRRRNVRRVPGPQGELKKVPRPGGFYVYMREDWGGLFPFPVTMRVMWDDE.

Low complexity predominate over residues 46–56; sequence SSKESPSRKSS. The disordered stretch occupies residues 46 to 113; that stretch reads SSKESPSRKS…TQHGDGTYPT (68 aa). Over residues 57–74 the composition is skewed to polar residues; it reads TIGQSTRNGSCQADTQKG. Over residues 81-98 the composition is skewed to basic and acidic residues; that stretch reads EKPKPVKENPMKKLKEMS. A fatty acid alpha-dioxygenase region spans residues 177-525; that stretch reads TDSLINELWE…DGKFDDDDLV (349 aa). Histidine 276 is a heme b binding site. Tyrosine 454 is a catalytic residue. Histidine 457 provides a ligand contact to heme b. Residues 732 to 1153 form an epoxy alcohol synthase region; it reads RVNITSYGGA…VTMRVMWDDE (422 aa). Position 1086 (cysteine 1086) interacts with heme.

In the N-terminal section; belongs to the peroxidase family. This sequence in the C-terminal section; belongs to the cytochrome P450 family. As to quaternary structure, homotetramer. The cofactor is heme b. Heme serves as cofactor.

It carries out the reaction (9Z)-octadecenoate + O2 = (8R)-hydroperoxy-(9Z)-octadecenoate. The enzyme catalyses (9Z)-octadecenoate + O2 = 10-hydroperoxy-(8E)-octadecenoate. It catalyses the reaction (9Z,12Z)-octadecadienoate + O2 = (8E,10R,12Z)-10-hydroperoxyoctadeca-8,12-dienoate. The catalysed reaction is (9Z,12Z,15Z)-octadecatrienoate + O2 = (10R)-hydroperoxy-(8E,12Z,15Z)-octadecatrienoate. It carries out the reaction (9Z,12Z,15Z)-octadecatrienoate + O2 = (8R)-hydroperoxy-(9Z,12Z,15Z)-octadecatrienoate. The enzyme catalyses (11Z,14Z)-eicosadienoate + O2 = 12-hydroperoxy-(10E,14Z)-eicosadienoate. It catalyses the reaction (11Z,14Z,17Z)-eicosatrienoate + O2 = 12-hydroperoxy-(10E,14Z,17Z)-eicosatrienoate. The catalysed reaction is (12R,13S)-epoxy-(9Z)-octadecenoate + O2 = (12R,13S)-epoxy-(10R)-hydroperoxy-(8E)-octadecenoate. It carries out the reaction (8E,10R,12Z)-10-hydroperoxyoctadeca-8,12-dienoate = (12S,13R)-epoxy-(10R)-hydroxy-(8E)-octadecenoate. The enzyme catalyses (10R)-hydroperoxy-(8E,12Z,15Z)-octadecatrienoate = 12,13-epoxy-(10R)-hydroxy-(8E,15Z)-octadecadienoate. It catalyses the reaction 12-hydroperoxy-(10E,14Z)-eicosadienoate = 10,11-epoxy-12-hydroxy-(14Z)-eicosenoate. The catalysed reaction is 12-hydroperoxy-(10E,14Z,17Z)-eicosatrienoate = 14,15-epoxy-12-hydroxy-(10E,17Z)-eicosadienoate. It carries out the reaction (13R)-hydroperoxy-(9Z,11E)-octadecadienoate = (12R,13R)-epoxy-(11S)-hydroxy-(9Z)-octadecenoate. The enzyme catalyses (13S)-hydroperoxy-(9Z,11E)-octadecadienoate = (12R,13R)-epoxy-(11S)-hydroxy-(9Z)-octadecenoate. It catalyses the reaction 12-hydroperoxy-(10E,14Z)-eicosadienoate = 14,15-epoxy-12-hydroxy-(10E)-eicosenoate. The catalysed reaction is 12-hydroperoxy-(10E,14Z,17Z)-eicosatrienoate = 10,11-epoxy-12-hydroxy-(14Z,17Z)-eicosadienoate. Bifunctional dioxygenase (DOX)-epoxy alcohol synthase (EAS) that converts linoleic acid (18:2n-6) sequentially to 10(R)-hydroperoxy-8(E),12(Z)-octadecadienoic acid (10R-HPODE) and 10R-HPODE further to 12 S(13R)-epoxy-10(R)-hydroxy-8(E)-octadecenoic acid as the end product. Oxygenation at C-10 occurs by retention of the pro-R hydrogen of C-8 of 18:2n-6, suggesting antarafacial hydrogen abstraction and oxygenation. The epoxy alcohol is formed from 10R-HPODE, likely by heterolytic cleavage of the dioxygen bond and subsequent intramolecular epoxidation of the 12(Z) double bond. The DOX domain is also able to oxygenate position C-8 of linoleic acid to produce 8(R)-hydroperoxy-8(E),12(Z)-octadecadienoic acid (8R-HPODE). Moreover, the DOX domain can oxygenate alpha-linolenic acid (18:3n-3) at C-8 or C-10 to produce respectively 8HOTrE and 10HOTrE, oleic acid (18:1n-9) at C-8 or C-10 to produce respectively 8-H(P)OME and 10-H(P)OME (with 8R stereoisomer to over 95%), eicosadienoic acid (20:2n-6) at C-10 or C-12 to produce respectively 10(11)-epoxy-12-hydroxy-14(Z)-eicosenoic acid and 14(15)-epoxy-12-hydroxy-10(E)-eicosenoic acid, as well as eicosatrienoic acid (20:3n-3) at C-10 or C-12 to produce respectively 10(11)-epoxy-12-hydroxy-14(Z),17(Z)-eicosadienoic acid and 14(15)-epoxy-12-hydroxy-14(Z),17(Z)-eicosadienoic acid. On the other side, the enzyme EAS domain can also catalyze the conversion of 10HOTrE into 12(13)-epoxy-10(R)-hydroxy-8(E),15(Z)-octadecadienoic acid, 13-R-HPODE into the stereoisomers of 12(13)-epoxy-11-hydroxy-9(Z)-octadecenoic acids (erythro/threo, 1:4), as well as 13S-HPODE into the stereoisomers of 12(13)-epoxy-11-hydroxy-9(Z)-octadecenoic acids (erythro/threo, 1:4) (EAS activity). Gamma-linolenic acid (18:3n-6) is not a substrate. This chain is Bifunctional dioxygenase (DOX)-epoxy alcohol synthase (EAS), found in Pyricularia oryzae (strain 70-15 / ATCC MYA-4617 / FGSC 8958) (Rice blast fungus).